The primary structure comprises 470 residues: Argininosuccinate lyase (470 aa).

The protein belongs to the lyase 1 family. Argininosuccinate lyase subfamily.

Its subcellular location is the cytoplasm. It catalyses the reaction 2-(N(omega)-L-arginino)succinate = fumarate + L-arginine. It functions in the pathway amino-acid biosynthesis; L-arginine biosynthesis; L-arginine from L-ornithine and carbamoyl phosphate: step 3/3. This chain is Argininosuccinate lyase, found in Bordetella avium (strain 197N).